The chain runs to 353 residues: tRNA-specific 2-thiouridylase MnmA 2 (353 aa).

ATP is bound at residue 6–13; sequence LLSGGVDS. The segment at 92–94 is interaction with target base in tRNA; that stretch reads NPD. The active-site Nucleophile is cysteine 97. Cysteine 97 and cysteine 192 are disulfide-bonded. Glycine 120 contributes to the ATP binding site. The segment at 142–144 is interaction with tRNA; the sequence is KDQ. The active-site Cysteine persulfide intermediate is the cysteine 192.

The protein belongs to the MnmA/TRMU family.

Its subcellular location is the cytoplasm. The enzyme catalyses S-sulfanyl-L-cysteinyl-[protein] + uridine(34) in tRNA + AH2 + ATP = 2-thiouridine(34) in tRNA + L-cysteinyl-[protein] + A + AMP + diphosphate + H(+). In terms of biological role, catalyzes the 2-thiolation of uridine at the wobble position (U34) of tRNA, leading to the formation of s(2)U34. In Bacteroides fragilis (strain YCH46), this protein is tRNA-specific 2-thiouridylase MnmA 2.